Reading from the N-terminus, the 1041-residue chain is RAS protein activator like-3 (1041 aa).

The interval 1–59 (MKPECGQTMFRTFWSRSRDSSAMDPPLQSEEDSQTQPSLPSPLTSYRWHTGGSGEKAAG) is disordered. Residues 34 to 44 (QTQPSLPSPLT) are compositionally biased toward polar residues. 10 positions are modified to phosphoserine: Ser-41, Ser-74, Ser-187, Ser-189, Ser-190, Ser-193, Ser-239, Ser-252, Ser-256, and Ser-259. Residues 218–243 (SNQVHNVRKLLKRLKEKKRAKSELGA) are a coiled coil. The PH domain occupies 220 to 321 (QVHNVRKLLK…WIEDLRRQFQ (102 aa)). A disordered region spans residues 234–256 (KKRAKSELGAYTPRDGPPSALGS). Thr-262 is modified (phosphothreonine). The 119-residue stretch at 312–430 (WIEDLRRQFQ…APAAGLERWF (119 aa)) folds into the C2 domain. One can recognise a Ras-GAP domain in the interval 500–708 (GRAQALVTDL…PAMQHFLDQV (209 aa)). Residues 790–910 (GEKPGFLAPR…PGDRYQTTGT (121 aa)) form a disordered region. 2 positions are modified to phosphoserine: Ser-813 and Ser-816. A compositionally biased stretch (basic residues) spans 850–866 (RPTHRRPSAGSKPRPKG). Residues 931-1013 (QKALSLLVES…LRDSLQSLQL (83 aa)) are a coiled coil. Positions 1016–1041 (KTPGSRSQPLPLKAPCVNGADLSMGT) are disordered.

Predominantly expressed in hematopoietic tissues.

The protein localises to the cytoplasm. The protein resides in the cell cortex. Functions as a Ras GTPase-activating protein. Plays an important role in the expansion and functions of natural killer T (NKT) cells in the liver by negatively regulating RAS activity and the down-stream ERK signaling pathway. The polypeptide is RAS protein activator like-3 (Rasal3) (Mus musculus (Mouse)).